The following is a 125-amino-acid chain: Profilin-A (125 aa).

At Ser2 the chain carries N-acetylserine.

Belongs to the profilin family. As to quaternary structure, occurs in many kinds of cells as a complex with monomeric actin in a 1:1 ratio.

Its subcellular location is the cytoplasm. It is found in the cytoskeleton. Its function is as follows. Binds to actin and affects the structure of the cytoskeleton. At high concentrations, profilin prevents the polymerization of actin, whereas it enhances it at low concentrations. By binding to PIP2, it inhibits the formation of IP3 and DG. The chain is Profilin-A (PROA) from Physarum polycephalum (Slime mold).